The following is a 518-amino-acid chain: Sensor protein kinase HptS (518 aa).

The next 2 helical transmembrane spans lie at 20–40 (IFPVFLVIIIGLVSFYAIYIW) and 222–242 (GITLLIVMAVVLVLLVIFGFI). Positions 297 to 513 (EQLIHSIEHT…LICYKIPLSR (217 aa)) constitute a Histidine kinase domain. Residue His-325 is modified to Phosphohistidine; by autocatalysis.

Autophosphorylated.

The protein localises to the cell membrane. It carries out the reaction ATP + protein L-histidine = ADP + protein N-phospho-L-histidine.. Its function is as follows. Member of the two-component regulatory system HptS/HptR that regulates genes involved in hexose phosphate transport system in response to changes in extracellular phosphate sources. May act as a sensor protein kinase which is autophosphorylated at a histidine residue and transfers its phosphate group to the conserved aspartic acid residue in the regulatory domain of HptS. In turn, HptS antagonizes CcpA-dependent transcription of a subset of CcpA-regulated genes involved in antibiotic susceptibility. The protein is Sensor protein kinase HptS (hptS) of Staphylococcus aureus (strain bovine RF122 / ET3-1).